A 496-amino-acid chain; its full sequence is Glycerol kinase (496 aa).

Threonine 12 serves as a coordination point for ADP. Threonine 12, threonine 13, and serine 14 together coordinate ATP. Residue threonine 12 participates in sn-glycerol 3-phosphate binding. Residue arginine 16 participates in ADP binding. Sn-glycerol 3-phosphate contacts are provided by arginine 82, glutamate 83, and tyrosine 134. Positions 82, 83, and 134 each coordinate glycerol. Histidine 230 bears the Phosphohistidine; by HPr mark. Residue aspartate 244 participates in sn-glycerol 3-phosphate binding. The glycerol site is built by aspartate 244 and glutamine 245. Residues threonine 266 and glycine 309 each coordinate ADP. Residues threonine 266, glycine 309, glutamine 313, and glycine 410 each contribute to the ATP site. ADP contacts are provided by glycine 410 and asparagine 414.

It belongs to the FGGY kinase family. In terms of assembly, homotetramer and homodimer (in equilibrium). Post-translationally, the phosphoenolpyruvate-dependent sugar phosphotransferase system (PTS), including enzyme I, and histidine-containing protein (HPr) are required for the phosphorylation, which leads to the activation of the enzyme.

It catalyses the reaction glycerol + ATP = sn-glycerol 3-phosphate + ADP + H(+). Its pathway is polyol metabolism; glycerol degradation via glycerol kinase pathway; sn-glycerol 3-phosphate from glycerol: step 1/1. Its activity is regulated as follows. Activated by phosphorylation and inhibited by fructose 1,6-bisphosphate (FBP). Functionally, key enzyme in the regulation of glycerol uptake and metabolism. Catalyzes the phosphorylation of glycerol to yield sn-glycerol 3-phosphate. In Bacillus thuringiensis (strain Al Hakam), this protein is Glycerol kinase.